Reading from the N-terminus, the 391-residue chain is MESLKEMRKAQMSEGPAAILAIGTANPDNVYMQADYPDYYFKMTKSEHMTELKDKFRTLCEKSMIRKRHMCFSEEFLKANPEVCKHMGKSLNARQDIAVVETPRLGNEAAVKAIKEWGQPKSSITHLIFCSSAGVDMPGADYQLTRILGLNPSVKRMMIYQQGCYAGGTVLRLAKDLAENNKGSRVLVVCSELTAPTFRGPSPDAVDSLVGQALFADGAAALVVGADPDSSIERALYYLVSASQMLLPDSDGAIEGHIREEGLTVHLKKDVPALFSGNIDTPLVEAFKPLGISDWNSIFWIAHPGGPAILDQIEEKLGLKEDKLRASKHVMSEYGNMSSSCVLFVLDEMRSRSLQDGKSTTGEGLDWGVLFGFGPGLTVETIVLRSVPIEA.

The active site involves cysteine 164.

It belongs to the thiolase-like superfamily. Chalcone/stilbene synthases family.

It carries out the reaction N-methylanthraniloyl-CoA + 3 malonyl-CoA + 3 H(+) = 1,3-dihydroxy-N-methylacridone + 3 CO2 + 4 CoA + H2O. In Ruta graveolens (Common rue), this protein is Probable acridone synthase 3 (ACS3).